We begin with the raw amino-acid sequence, 220 residues long: dITP/XTP pyrophosphatase (220 aa).

13-18 (SHNAGK) serves as a coordination point for substrate. Residues Asp-45 and Asp-74 each coordinate Mg(2+). Asp-74 acts as the Proton acceptor in catalysis. Substrate is bound by residues Ser-75, 163 to 166 (FGYD), Lys-186, and 199 to 200 (HR).

Belongs to the HAM1 NTPase family. As to quaternary structure, homodimer. Mg(2+) is required as a cofactor.

It catalyses the reaction XTP + H2O = XMP + diphosphate + H(+). The enzyme catalyses dITP + H2O = dIMP + diphosphate + H(+). It carries out the reaction ITP + H2O = IMP + diphosphate + H(+). Functionally, pyrophosphatase that catalyzes the hydrolysis of nucleoside triphosphates to their monophosphate derivatives, with a high preference for the non-canonical purine nucleotides XTP (xanthosine triphosphate), dITP (deoxyinosine triphosphate) and ITP. Seems to function as a house-cleaning enzyme that removes non-canonical purine nucleotides from the nucleotide pool, thus preventing their incorporation into DNA/RNA and avoiding chromosomal lesions. In Mesorhizobium japonicum (strain LMG 29417 / CECT 9101 / MAFF 303099) (Mesorhizobium loti (strain MAFF 303099)), this protein is dITP/XTP pyrophosphatase.